The following is a 455-amino-acid chain: Asparagine--tRNA ligase (455 aa).

Belongs to the class-II aminoacyl-tRNA synthetase family. As to quaternary structure, homodimer.

The protein resides in the cytoplasm. It carries out the reaction tRNA(Asn) + L-asparagine + ATP = L-asparaginyl-tRNA(Asn) + AMP + diphosphate + H(+). This chain is Asparagine--tRNA ligase, found in Lawsonia intracellularis (strain PHE/MN1-00).